We begin with the raw amino-acid sequence, 55 residues long: Mitochondrial import receptor subunit TOM7 homolog (55 aa).

Topologically, residues 1–20 (MVKLSKEAKQRLQQLFKGGQ) are cytoplasmic. A helical membrane pass occupies residues 21–36 (FAIRWGFIPLVIYLGF). The Mitochondrial intermembrane segment spans residues 37 to 55 (KRGADPGMPEPTVLSLLWG).

It belongs to the Tom7 family. Forms part of the preprotein translocase complex of the outer mitochondrial membrane (TOM complex) which consists of at least 7 different proteins (TOMM5, TOMM6, TOMM7, TOMM20, TOMM22, TOMM40 and TOMM70).

The protein resides in the mitochondrion outer membrane. Required for assembly and stability of the TOM complex. Positive regulator of PRKN translocation to damaged mitochondria. Acts probably by stabilizing PINK1 on the outer membrane of depolarized mitochondria. This is Mitochondrial import receptor subunit TOM7 homolog (TOMM7) from Bos taurus (Bovine).